The primary structure comprises 165 residues: Crossover junction endodeoxyribonuclease RuvC (165 aa).

Active-site residues include Asp-8, Glu-67, and Asp-139. Residues Asp-8, Glu-67, and Asp-139 each coordinate Mg(2+).

Belongs to the RuvC family. In terms of assembly, homodimer which binds Holliday junction (HJ) DNA. The HJ becomes 2-fold symmetrical on binding to RuvC with unstacked arms; it has a different conformation from HJ DNA in complex with RuvA. In the full resolvosome a probable DNA-RuvA(4)-RuvB(12)-RuvC(2) complex forms which resolves the HJ. It depends on Mg(2+) as a cofactor.

The protein resides in the cytoplasm. The catalysed reaction is Endonucleolytic cleavage at a junction such as a reciprocal single-stranded crossover between two homologous DNA duplexes (Holliday junction).. Functionally, the RuvA-RuvB-RuvC complex processes Holliday junction (HJ) DNA during genetic recombination and DNA repair. Endonuclease that resolves HJ intermediates. Cleaves cruciform DNA by making single-stranded nicks across the HJ at symmetrical positions within the homologous arms, yielding a 5'-phosphate and a 3'-hydroxyl group; requires a central core of homology in the junction. The consensus cleavage sequence is 5'-(A/T)TT(C/G)-3'. Cleavage occurs on the 3'-side of the TT dinucleotide at the point of strand exchange. HJ branch migration catalyzed by RuvA-RuvB allows RuvC to scan DNA until it finds its consensus sequence, where it cleaves and resolves the cruciform DNA. This Alkalilimnicola ehrlichii (strain ATCC BAA-1101 / DSM 17681 / MLHE-1) protein is Crossover junction endodeoxyribonuclease RuvC.